The following is a 184-amino-acid chain: Photosystem I assembly protein Ycf4 (184 aa).

The next 2 helical transmembrane spans lie at 21 to 43 (NFCWAFILFLGSLGFLLVGISSY) and 58 to 80 (LFFPQGIVMSFYGIAGLFISSYL).

The protein belongs to the Ycf4 family.

It is found in the plastid. The protein resides in the chloroplast thylakoid membrane. Functionally, seems to be required for the assembly of the photosystem I complex. In Carpobrotus chilensis (Sea fig), this protein is Photosystem I assembly protein Ycf4.